The sequence spans 874 residues: Alanine--tRNA ligase (874 aa).

Zn(2+)-binding residues include histidine 562, histidine 566, cysteine 664, and histidine 668.

It belongs to the class-II aminoacyl-tRNA synthetase family. Requires Zn(2+) as cofactor.

The protein resides in the cytoplasm. The catalysed reaction is tRNA(Ala) + L-alanine + ATP = L-alanyl-tRNA(Ala) + AMP + diphosphate. Its function is as follows. Catalyzes the attachment of alanine to tRNA(Ala) in a two-step reaction: alanine is first activated by ATP to form Ala-AMP and then transferred to the acceptor end of tRNA(Ala). Also edits incorrectly charged Ser-tRNA(Ala) and Gly-tRNA(Ala) via its editing domain. This Shewanella oneidensis (strain ATCC 700550 / JCM 31522 / CIP 106686 / LMG 19005 / NCIMB 14063 / MR-1) protein is Alanine--tRNA ligase.